Reading from the N-terminus, the 260-residue chain is UPF0758 protein Smed_1459 (260 aa).

An MPN domain is found at 138–260 (VLSSWSAVID…HVSLKGLQLF (123 aa)). Histidine 209, histidine 211, and aspartate 222 together coordinate Zn(2+). The short motif at 209–222 (HNHPSGDPTPSCAD) is the JAMM motif element.

Belongs to the UPF0758 family.

In Sinorhizobium medicae (strain WSM419) (Ensifer medicae), this protein is UPF0758 protein Smed_1459.